We begin with the raw amino-acid sequence, 135 residues long: MRKPTESAGPTQRQQRVAELVRHAIAEVLSRGDLQDPVLSRHVITVPEVRMSPDLKLATAYVMPLGGEDEQPVIEALERNRKVLRQEVARRVNLKFAPDLRFRRDETFDEAARIDRLLRSDKVQRDLGPDRDSGE.

The protein belongs to the RbfA family. As to quaternary structure, monomer. Binds 30S ribosomal subunits, but not 50S ribosomal subunits or 70S ribosomes.

The protein localises to the cytoplasm. One of several proteins that assist in the late maturation steps of the functional core of the 30S ribosomal subunit. Associates with free 30S ribosomal subunits (but not with 30S subunits that are part of 70S ribosomes or polysomes). Required for efficient processing of 16S rRNA. May interact with the 5'-terminal helix region of 16S rRNA. The polypeptide is Ribosome-binding factor A (Methylobacterium nodulans (strain LMG 21967 / CNCM I-2342 / ORS 2060)).